A 301-amino-acid chain; its full sequence is 4-hydroxy-tetrahydrodipicolinate synthase (301 aa).

T46 contributes to the pyruvate binding site. Catalysis depends on Y134, which acts as the Proton donor/acceptor. K162 serves as the catalytic Schiff-base intermediate with substrate. I203 is a binding site for pyruvate.

The protein belongs to the DapA family. As to quaternary structure, homotetramer; dimer of dimers.

The protein resides in the cytoplasm. It catalyses the reaction L-aspartate 4-semialdehyde + pyruvate = (2S,4S)-4-hydroxy-2,3,4,5-tetrahydrodipicolinate + H2O + H(+). The protein operates within amino-acid biosynthesis; L-lysine biosynthesis via DAP pathway; (S)-tetrahydrodipicolinate from L-aspartate: step 3/4. Catalyzes the condensation of (S)-aspartate-beta-semialdehyde [(S)-ASA] and pyruvate to 4-hydroxy-tetrahydrodipicolinate (HTPA). The sequence is that of 4-hydroxy-tetrahydrodipicolinate synthase from Anaplasma marginale (strain St. Maries).